A 257-amino-acid chain; its full sequence is Short chain dehydrogenase helC (257 aa).

Positions 1–22 are cleaved as a signal peptide; the sequence is MNTAIITGAAQGVGLCIAEALA. Residue Val-13 participates in NADP(+) binding. Asn-46 carries an N-linked (GlcNAc...) asparagine glycan. Asp-60 and Asn-87 together coordinate NADP(+). The N-linked (GlcNAc...) asparagine glycan is linked to Asn-110. NADP(+)-binding residues include Tyr-154, Lys-158, Ile-185, and Thr-187. Tyr-154 functions as the Proton acceptor in the catalytic mechanism. The active-site Lowers pKa of active site Tyr is the Lys-158.

The protein belongs to the short-chain dehydrogenases/reductases (SDR) family.

The protein operates within mycotoxin biosynthesis. Its function is as follows. Short chain dehydrogenase; part of the gene cluster that mediates the biosynthesis of helvolic acid, an antibacterial nortriterpenoid. Protostadienol synthase helA cyclizes (3S)-oxidosqualene to (17Z)-protosta-17(20),24-dien-3-beta-ol (protostadienol). The synthesis of protostadienol is followed by several steps of monooxygenation, dehydrogenation, and acyl transfer to yield the final helvolic acid. Following the cyclization to the tetracyclic protostadienol by helA, cytochrome P450 monooxygenases helB1-mediated and helB2-mediated oxidation at C-4 and C-16, acyltransferase helD2-dependent acetylation of 16-OH, oxidation of C-21 by cytochrome P450 monooxygenase helB4, and short chain dehydrogenase helC-dependent oxidative decarboxylation yield the fusidane skeleton. This intermediate is further modified in three additional steps mediated by the cytochrome P450 monooxygenase helB3, the acyltransferase helD1, and the 3-ketosteroid 1-dehydrogenase helE to give helvolic acid. Compared with the late stages in the biosynthesis of helvolic acid, enzymes involved in the early stage modifications act in a relatively strict order. The hydroxylation of C-16 by helB1 and subsequent acetylation by helD2 should occur before the helB3-mediated oxidation of C-21. C-4 demethylation in fusidane-type antibiotics proceeds in an unusual manner though it is also achieved by oxidative decarboxylation. The methyl group at C-4 beta position is oxidized by helB1 and subsequently removed by the short chain dehydrogenase helC. This Aspergillus fumigatus (strain ATCC MYA-4609 / CBS 101355 / FGSC A1100 / Af293) (Neosartorya fumigata) protein is Short chain dehydrogenase helC.